The sequence spans 605 residues: Solute carrier family 23 member 1 (605 aa).

The tract at residues 1–30 (MKTPEDPGSPKQHEVVDSAGTSTRDRQAPL) is disordered. Residues 1–59 (MKTPEDPGSPKQHEVVDSAGTSTRDRQAPLPTEPKFDMLYKIEDVPPWYLCILLGFQHY) lie on the Cytoplasmic side of the membrane. The helical transmembrane segment at 60 to 80 (LTCFSGTIAVPFLLAEALCVG) threads the bilayer. Topologically, residues 81 to 88 (RDQHMVSQ) are extracellular. Residues 89–109 (LIGTIFTCVGITTLIQTTVGI) form a helical membrane-spanning segment. R110 is a topological domain (cytoplasmic). A helical transmembrane segment spans residues 111–131 (LPLFQASAFAFLVPAKSILAL). The Extracellular segment spans residues 132–166 (ERWKCPSEEEIYGNWSMPLNTSHIWHPRIREVQGA). N-linked (GlcNAc...) asparagine glycans are attached at residues N145 and N151. Residues 167-187 (IMVSSMVEVVIGLMGLPGALL) form a helical membrane-spanning segment. Over 188-214 (SYIGPLTVTPTVSLIGLSVFQAAGDRA) the chain is Cytoplasmic. The helical transmembrane segment at 215-232 (GSHWGISACSILLIVLFS) threads the bilayer. Topologically, residues 233 to 236 (QYLR) are extracellular. An intramembrane region (helical) is located at residues 237–250 (NLTFLLPVYRWGKG). The Extracellular segment spans residues 251-257 (LTLFRVQ). The helical transmembrane segment at 258–278 (IFKMFPIVLAIMTVWLLCYVL) threads the bilayer. Over 279–319 (TLTDVLPADPTVYGFQARTDARGDIMAISPWIRIPYPCQWG) the chain is Cytoplasmic. A helical membrane pass occupies residues 320 to 340 (LPTVTVAAVLGMFSATLAGII). At 341–365 (ESIGDYYACARLAGAPPPPVHAINR) the chain is on the extracellular side. A helical transmembrane segment spans residues 366–386 (GIFTEGICCIIAGLLGTGNGS). Topologically, residues 387–409 (TSSSPNIGVLGITKVGSRRVVQY) are cytoplasmic. A helical membrane pass occupies residues 410–430 (GAGIMLILGAIGKFTALFASL). Over 431–433 (PDP) the chain is Extracellular. The chain crosses the membrane as a helical span at residues 434 to 454 (ILGGMFCTLFGMITAVGLSNL). The Cytoplasmic portion of the chain corresponds to 455–464 (QFVDMNSSRN). Residues 465–485 (LFVLGFSMFFGLTLPNYLDSN) form a helical membrane-spanning segment. The Extracellular portion of the chain corresponds to 486–497 (PGAINTGIPEVD). A helical transmembrane segment spans residues 498–518 (QILTVLLTTEMFVGGCLAFIL). Residues 519–605 (DNTVPGSPEE…IETGSVCTKV (87 aa)) lie on the Cytoplasmic side of the membrane. Residue T598 is modified to Phosphothreonine. S600 bears the Phosphoserine mark. T603 carries the phosphothreonine modification.

It belongs to the nucleobase:cation symporter-2 (NCS2) (TC 2.A.40) family. Phosphorylated. In terms of tissue distribution, expressed in kidney (at protein level).

It localises to the cell membrane. The enzyme catalyses L-ascorbate(out) + 2 Na(+)(out) = L-ascorbate(in) + 2 Na(+)(in). It carries out the reaction urate(out) + 2 Na(+)(out) = urate(in) + 2 Na(+)(in). Sodium:L-ascorbate cotransporter. Mediates electrogenic uptake of vitamin C, with a stoichiometry of 2 Na(+) for each L-ascorbate. Has retained some ancestral activity toward nucleobases such as urate, an oxidized purine. Low-affinity high-capacity sodium:urate cotransporter, may regulate serum urate levels by serving as a renal urate re-absorber. In Mus musculus (Mouse), this protein is Solute carrier family 23 member 1 (Slc23a1).